A 165-amino-acid polypeptide reads, in one-letter code: MPPKFDPNEIKVVYLRCTGGEVGATSALAPKIGPLGLSPKKVGDDIAKATGDWKGLRITVKLTIQNRQAQIEVVPSASALIIKALKEPPRDRKKQKNIKHNGNITFDEIVNIARQMRHRSLARELSGTIKEILGTAQSVGCNVDGRHPHDIIDDINSGAVECPAS.

A Phosphoserine modification is found at serine 38. Residue lysine 40 forms a Glycyl lysine isopeptide (Lys-Gly) (interchain with G-Cter in SUMO2) linkage. Lysine 48 participates in a covalent cross-link: Glycyl lysine isopeptide (Lys-Gly) (interchain with G-Cter in ubiquitin). Lysine 54 bears the N6-acetyllysine mark. Lysine 83 participates in a covalent cross-link: Glycyl lysine isopeptide (Lys-Gly) (interchain with G-Cter in ubiquitin). At serine 165 the chain carries Phosphoserine.

This sequence belongs to the universal ribosomal protein uL11 family. In terms of assembly, component of the large ribosomal subunit. Mature ribosomes consist of a small (40S) and a large (60S) subunit. The 40S subunit contains about 33 different proteins and 1 molecule of RNA (18S). The 60S subunit contains about 49 different proteins and 3 molecules of RNA (28S, 5.8S and 5S). In terms of processing, ubiquitinated at Lys-48 and Lys-83 by RNF14 and RNF25 in response to ribosome collisions (ribosome stalling).

The protein localises to the cytoplasm. Component of the large ribosomal subunit. The ribosome is a large ribonucleoprotein complex responsible for the synthesis of proteins in the cell. Binds directly to 26S ribosomal RNA. This is Large ribosomal subunit protein uL11 (Rpl12) from Rattus norvegicus (Rat).